The primary structure comprises 238 residues: Histidine/lysine/arginine/ornithine transport system permease protein HisM (238 aa).

Residues methionine 1–threonine 26 lie on the Periplasmic side of the membrane. One can recognise an ABC transmembrane type-1 domain in the interval valine 23 to phenylalanine 221. Residues leucine 27–glycine 47 form a helical membrane-spanning segment. Topologically, residues arginine 48–proline 58 are cytoplasmic. A helical transmembrane segment spans residues isoleucine 59–tyrosine 79. Residues serine 80–cysteine 104 are Periplasmic-facing. Residues threonine 105–isoleucine 125 form a helical membrane-spanning segment. Over arginine 126–arginine 157 the chain is Cytoplasmic. A helical membrane pass occupies residues isoleucine 158–phenylalanine 178. Residues threonine 179–proline 199 are Periplasmic-facing. A helical membrane pass occupies residues phenylalanine 200–leucine 220. Residues phenylalanine 221–histidine 238 are Cytoplasmic-facing.

The protein belongs to the binding-protein-dependent transport system permease family. HisMQ subfamily. The HisPMQJ complex is composed of two ATP-binding proteins (HisP), two transmembrane proteins (HisM and HisQ) and a solute-binding protein (HisJ). The HisPMQ-ArgT complex is composed of two ATP-binding proteins (HisP), two transmembrane proteins (HisM and HisQ) and a solute-binding protein (ArgT).

The protein resides in the cell inner membrane. In terms of biological role, part of the ABC transporter complex HisPMQJ involved in histidine transport. Is also part of the ABC transporter complex HisPMQ-ArgT involved in lysine/arginine/ornithine transport. Probably responsible for the translocation of the substrate across the membrane. This Escherichia coli O157:H7 protein is Histidine/lysine/arginine/ornithine transport system permease protein HisM (hisM).